The chain runs to 130 residues: Large ribosomal subunit protein uL14 (130 aa).

Belongs to the universal ribosomal protein uL14 family. As to quaternary structure, part of the 50S ribosomal subunit. Forms a cluster with proteins L3 and L19. In the 70S ribosome, L14 and L19 interact and together make contacts with the 16S rRNA in bridges B5 and B8.

Its function is as follows. Binds to 23S rRNA. Forms part of two intersubunit bridges in the 70S ribosome. The polypeptide is Large ribosomal subunit protein uL14 (Helicobacter pylori (strain P12)).